Here is a 669-residue protein sequence, read N- to C-terminus: DNA ligase (669 aa).

NAD(+)-binding positions include D34–D38, S83–L84, and E114. The active-site N6-AMP-lysine intermediate is K116. NAD(+) is bound by residues R137, E171, K287, and K311. 4 residues coordinate Zn(2+): C405, C408, C423, and C428. Residues N591–K669 form the BRCT domain.

This sequence belongs to the NAD-dependent DNA ligase family. LigA subfamily. Mg(2+) serves as cofactor. Requires Mn(2+) as cofactor.

The catalysed reaction is NAD(+) + (deoxyribonucleotide)n-3'-hydroxyl + 5'-phospho-(deoxyribonucleotide)m = (deoxyribonucleotide)n+m + AMP + beta-nicotinamide D-nucleotide.. Its function is as follows. DNA ligase that catalyzes the formation of phosphodiester linkages between 5'-phosphoryl and 3'-hydroxyl groups in double-stranded DNA using NAD as a coenzyme and as the energy source for the reaction. It is essential for DNA replication and repair of damaged DNA. The protein is DNA ligase of Bacillus cereus (strain AH187).